A 215-amino-acid chain; its full sequence is UPF0502 protein PSEEN2299 (215 aa).

The protein belongs to the UPF0502 family.

This chain is UPF0502 protein PSEEN2299, found in Pseudomonas entomophila (strain L48).